The following is a 363-amino-acid chain: Chemerin-like receptor 1 (363 aa).

Over 1-39 (MDFEDYNSTYEDSYTDDFDTIVALEEFSPLEGRVVRIFL) the chain is Extracellular. The N-linked (GlcNAc...) asparagine glycan is linked to Asn-7. A helical membrane pass occupies residues 40-60 (VVVYSIICFLGILGNGLVIVI). Residues 61–71 (ATFKMKKTVNT) are Cytoplasmic-facing. The helical transmembrane segment at 72-92 (VWFLNLAVADFLFNVFLPIHI) threads the bilayer. At 93-109 (AYAAMDYHWVFGTAMCK) the chain is on the extracellular side. A disulfide bridge links Cys-108 with Cys-185. Residues 110 to 130 (ISNFLLIHNMYTSVFLLTVIS) traverse the membrane as a helical segment. Residues 131-152 (FDRCISVLLPVWSQNHRSIRLA) are Cytoplasmic-facing. Residues 153 to 173 (YMACVVIWVLAFFLSSPSLVF) form a helical membrane-spanning segment. Topologically, residues 174–220 (RDTAHLHGKISCFNNFSLSATSSSSWPTHPQMDTVGFGRQMVVTITR) are extracellular. Asn-188 carries an N-linked (GlcNAc...) asparagine glycan. The helical transmembrane segment at 221–241 (FLCGFLVPVLIISACYFTIVY) threads the bilayer. Residues 242–256 (KLRRNRLAKTKKPFK) lie on the Cytoplasmic side of the membrane. Residues 257-277 (IIVTIIITFFLCWCPYHTLYL) form a helical membrane-spanning segment. Residues 278-283 (LELHHR) lie on the Extracellular side of the membrane. A helical transmembrane segment spans residues 284 to 304 (AMPGSVFSLGVPLATAIAIAN). Residues 305-363 (SCMNPILYVFMGQDFKKFKVALFSRLVNALSEDTGHSSYPSHRSFTKMSSMNERETSML) lie on the Cytoplasmic side of the membrane. Phosphoserine is present on Ser-335. A disordered region spans residues 337-363 (DTGHSSYPSHRSFTKMSSMNERETSML). Thr-338 bears the Phosphothreonine mark. The segment covering 340–355 (HSSYPSHRSFTKMSSM) has biased composition (polar residues). Phosphoserine is present on residues Ser-345, Ser-348, and Ser-354.

Belongs to the chemokine-like receptor (CMKLR) family. Predominantly expressed in spleen and temperately in adipose tissue.

It localises to the cell membrane. Functionally, receptor for the chemoattractant adipokine chemerin/RARRES2 and for the omega-3 fatty acid derived molecule resolvin E1. Interaction with RARRES2 initiates activation of G proteins G(i)/G(o) and beta-arrestin pathways inducing cellular responses via second messenger pathways such as intracellular calcium mobilization, phosphorylation of MAP kinases MAPK1/MAPK3 (ERK1/2), TYRO3, MAPK14/P38MAPK and PI3K leading to multifunctional effects, like, reduction of immune responses, enhancing of adipogenesis and angionesis. Resolvin E1 down-regulates cytokine production in macrophages by reducing the activation of MAPK1/3 (ERK1/2) and NF-kappa-B. Positively regulates adipogenesis and adipocyte metabolism. The chain is Chemerin-like receptor 1 (CMLKR1) from Sus scrofa (Pig).